We begin with the raw amino-acid sequence, 434 residues long: Probable zinc metalloprotease PTRG_04772 (434 aa).

N88 carries N-linked (GlcNAc...) asparagine glycosylation. 3 residues coordinate Zn(2+): H111, D131, and E164. The N-linked (GlcNAc...) asparagine glycan is linked to N179. Residue D191 participates in Zn(2+) binding. 6 N-linked (GlcNAc...) asparagine glycosylation sites follow: N220, N299, N347, N353, N390, and N395. Residues 340–433 form the Fibronectin type-III domain; the sequence is SPTNVGINTT…LPFPFGCARN (94 aa).

Belongs to the peptidase M28 family. M28B subfamily. The cofactor is Zn(2+).

The protein resides in the secreted. This Pyrenophora tritici-repentis (strain Pt-1C-BFP) (Wheat tan spot fungus) protein is Probable zinc metalloprotease PTRG_04772.